A 508-amino-acid polypeptide reads, in one-letter code: Glycerol kinase (508 aa).

T14 contributes to the ADP binding site. T14, T15, and S16 together coordinate ATP. T14 contributes to the sn-glycerol 3-phosphate binding site. R18 contributes to the ADP binding site. Sn-glycerol 3-phosphate-binding residues include R84, E85, Y136, and D245. Residues R84, E85, Y136, D245, and Q246 each coordinate glycerol. Positions 267 and 314 each coordinate ADP. 3 residues coordinate ATP: T267, G314, and Q318. Residue N419 participates in ADP binding.

The protein belongs to the FGGY kinase family.

The catalysed reaction is glycerol + ATP = sn-glycerol 3-phosphate + ADP + H(+). It participates in polyol metabolism; glycerol degradation via glycerol kinase pathway; sn-glycerol 3-phosphate from glycerol: step 1/1. Inhibited by fructose 1,6-bisphosphate (FBP). Key enzyme in the regulation of glycerol uptake and metabolism. Catalyzes the phosphorylation of glycerol to yield sn-glycerol 3-phosphate. The polypeptide is Glycerol kinase (Bordetella pertussis (strain Tohama I / ATCC BAA-589 / NCTC 13251)).